The sequence spans 273 residues: Energy-coupling factor transporter ATP-binding protein EcfA (273 aa).

The 236-residue stretch at 2-237 (ISIRDLTYFY…RASLLALGLA (236 aa)) folds into the ABC transporter domain. 36-43 (GRNGSGKS) is a binding site for ATP.

Belongs to the ABC transporter superfamily. Energy-coupling factor EcfA family. Forms a stable energy-coupling factor (ECF) transporter complex composed of 2 membrane-embedded substrate-binding proteins (S component), 2 ATP-binding proteins (A component) and 2 transmembrane proteins (T component).

It localises to the cell membrane. Its function is as follows. ATP-binding (A) component of a common energy-coupling factor (ECF) ABC-transporter complex. Unlike classic ABC transporters this ECF transporter provides the energy necessary to transport a number of different substrates. In Syntrophomonas wolfei subsp. wolfei (strain DSM 2245B / Goettingen), this protein is Energy-coupling factor transporter ATP-binding protein EcfA.